The primary structure comprises 140 residues: Protein E6 (140 aa).

2 zinc fingers span residues 27–63 and 100–136; these read CIFC…CSEC and CICC…CRNC.

Belongs to the papillomaviridae E6 protein family. Forms homodimers. Interacts with ubiquitin-protein ligase UBE3A/E6-AP; this interaction stimulates UBE3A ubiquitin activity. Interacts with host BAK1.

It is found in the host cytoplasm. The protein resides in the host nucleus. Plays a major role in the induction and maintenance of cellular transformation. E6 associates with host UBE3A/E6-AP ubiquitin-protein ligase and modulates its activity. Protects host keratinocytes from apoptosis by mediating the degradation of host BAK1. May also inhibit host immune response. This Human papillomavirus 4 protein is Protein E6.